The chain runs to 478 residues: MAEEGLLLPASSTSSSSSLLSEISNACTRPFVLAFIVGSCGAFAFGCIIGYSAPTQTSIMKDLNLSIADYSLFGSILTVGLILGALICGKLTDLVGRVKTIWITNILFVIGWFAIAFAKGVWLLDLGRLLQGISIGISVYLGPVYITEIAPRNLRGAASSFAQLFAGVGISVFYALGTIVAWRNLAILGCIPSLMVLPLLFFIPESPRWLAKVGREMEVEAVLLSLRGEKSDVSDEAAEILEYTEHVKQQQDIDDRGFFKLFQRKYAFSLTIGVVLIALPQLGGLNGYSFYTDSIFISTGVSSDFGFISTSVVQMFGGILGTVLVDVSGRRTLLLVSQAGMFLGCLTTAISFFLKENHCWETGTPVLALFSVMVYFGSYGSGMGSIPWIIASEIYPVDVKGAAGTMCNLVSSISAWLVAYSFSYLLQWSSTGTFLMFATVAGLGFVFIAKLVPETKGKSLEEIQSLFTDSPPQDSTIF.

The next 12 helical transmembrane spans lie at 31–51, 67–87, 106–126, 129–149, 161–181, 185–205, 267–287, 305–325, 333–353, 366–386, 406–426, and 432–452; these read FVLA…IIGY, IADY…GALI, ILFV…LLDL, LLQG…ITEI, FAQL…TIVA, LAIL…FIPE, AFSL…GLNG, FGFI…TVLV, LLLV…ISFF, VLAL…MGSI, MCNL…SYLL, and GTFL…AKLV.

It belongs to the major facilitator superfamily. Sugar transporter (TC 2.A.1.1) family.

It is found in the membrane. Sugar transporter. This is Sugar transporter ERD6-like 15 from Arabidopsis thaliana (Mouse-ear cress).